A 914-amino-acid polypeptide reads, in one-letter code: TRPM8 channel-associated factor 3 (914 aa).

Residues Asn-533–Gly-832 enclose the Peptidase M60 domain.

Belongs to the TCAF family.

In terms of biological role, may play a role in the regulation of the cation channel TRPM8 activity. In Rattus norvegicus (Rat), this protein is TRPM8 channel-associated factor 3.